A 188-amino-acid chain; its full sequence is Pyridoxal 5'-phosphate synthase subunit PdxT (188 aa).

46-48 contributes to the L-glutamine binding site; that stretch reads GES. C78 (nucleophile) is an active-site residue. L-glutamine contacts are provided by residues R105 and 134 to 135; that span reads IR. Catalysis depends on charge relay system residues H170 and E172.

Belongs to the glutaminase PdxT/SNO family. In terms of assembly, in the presence of PdxS, forms a dodecamer of heterodimers. Only shows activity in the heterodimer.

It catalyses the reaction aldehydo-D-ribose 5-phosphate + D-glyceraldehyde 3-phosphate + L-glutamine = pyridoxal 5'-phosphate + L-glutamate + phosphate + 3 H2O + H(+). It carries out the reaction L-glutamine + H2O = L-glutamate + NH4(+). The protein operates within cofactor biosynthesis; pyridoxal 5'-phosphate biosynthesis. Its function is as follows. Catalyzes the hydrolysis of glutamine to glutamate and ammonia as part of the biosynthesis of pyridoxal 5'-phosphate. The resulting ammonia molecule is channeled to the active site of PdxS. The polypeptide is Pyridoxal 5'-phosphate synthase subunit PdxT (Thermotoga neapolitana (strain ATCC 49049 / DSM 4359 / NBRC 107923 / NS-E)).